The primary structure comprises 167 residues: Leukotoxin-activating lysine-acyltransferase LktC serotype A1 (167 aa).

Residues His-22 and Asp-91 contribute to the active site.

Belongs to the RTX toxin acyltransferase family.

It localises to the cytoplasm. It catalyses the reaction a fatty acyl-[ACP] + L-lysyl-[protein] = N(6)-(fatty acyl)-L-lysyl-[protein] + holo-[ACP] + H(+). Its function is as follows. Involved in fatty acylation of the protoxin (LktA) at two internal lysine residues, thereby converting it to the active toxin. This chain is Leukotoxin-activating lysine-acyltransferase LktC serotype A1 (lktC), found in Mannheimia haemolytica (Pasteurella haemolytica).